The sequence spans 366 residues: NADH-quinone oxidoreductase subunit D (366 aa).

It belongs to the complex I 49 kDa subunit family. In terms of assembly, NDH-1 is composed of 14 different subunits. Subunits NuoB, C, D, E, F, and G constitute the peripheral sector of the complex.

The protein resides in the cell membrane. The enzyme catalyses a quinone + NADH + 5 H(+)(in) = a quinol + NAD(+) + 4 H(+)(out). NDH-1 shuttles electrons from NADH, via FMN and iron-sulfur (Fe-S) centers, to quinones in the respiratory chain. The immediate electron acceptor for the enzyme in this species is believed to be a menaquinone. Couples the redox reaction to proton translocation (for every two electrons transferred, four hydrogen ions are translocated across the cytoplasmic membrane), and thus conserves the redox energy in a proton gradient. This is NADH-quinone oxidoreductase subunit D from Bacillus cereus (strain ATCC 14579 / DSM 31 / CCUG 7414 / JCM 2152 / NBRC 15305 / NCIMB 9373 / NCTC 2599 / NRRL B-3711).